Consider the following 286-residue polypeptide: Ferric acinetobactin reductase (286 aa).

Residues 25 to 131 (MEQLEMTIVS…IGPRPHFIPN (107 aa)) form the FAD-binding FR-type domain. 12 residues coordinate FAD: arginine 79, valine 80, threonine 82, aspartate 96, valine 98, histidine 100, aspartate 102, serine 104, alanine 106, arginine 250, glycine 252, and serine 255.

It belongs to the SIP oxidoreductase family. In terms of assembly, monomer in solution. FAD serves as cofactor.

The enzyme catalyses 2 a Fe(II)-siderophore + NAD(+) + H(+) = 2 a Fe(III)-siderophore + NADH. The catalysed reaction is 2 a Fe(II)-siderophore + NADP(+) + H(+) = 2 a Fe(III)-siderophore + NADPH. Ferric-siderophore reductase involved in iron removal from the siderophores after their transport into the cell. Interacts with the siderophores acinetobactin (Acb) and preacinetobactin (pre-Acb) and catalyzes the reduction of the ferric iron bound to the siderophores to ferrous iron, resulting in destabilization of the siderophore chelation complex and entrance of ferrous iron into the intracellular pool of bioavailable metals. Can use NADH and NADPH as electron donors in vitro, but the reduction rate is very slow, suggesting that NADH and NADPH are not the physiological partners of BauF. The chain is Ferric acinetobactin reductase from Acinetobacter baumannii.